Here is a 57-residue protein sequence, read N- to C-terminus: Large ribosomal subunit protein bL32 (57 aa).

Basic residues predominate over residues 1–19; it reads MATPKRRMSRANTRSRRSQ. The interval 1–20 is disordered; it reads MATPKRRMSRANTRSRRSQW.

This sequence belongs to the bacterial ribosomal protein bL32 family.

The chain is Large ribosomal subunit protein bL32 from Mycobacterium marinum (strain ATCC BAA-535 / M).